Consider the following 1298-residue polypeptide: Phosphoribosylformylglycinamidine synthase (1298 aa).

The interval 303-327 (FPGAATGSGGEIRDEGATGRGAKPK) is disordered. Residues 305-316 (GAATGSGGEIRD), 384-386 (TGY), and Ala676 contribute to the ATP site. The Mg(2+) site is built by Asp677, Glu716, Asn720, and Asp884. Position 886 (Ser886) interacts with ATP. A Glutamine amidotransferase type-1 domain is found at 1045–1298 (VAVLREQGVN…MFRNARAWVN (254 aa)). Cys1138 serves as the catalytic Nucleophile. Active-site residues include His1263 and Glu1265.

This sequence in the N-terminal section; belongs to the FGAMS family. As to quaternary structure, monomer.

It localises to the cytoplasm. The enzyme catalyses N(2)-formyl-N(1)-(5-phospho-beta-D-ribosyl)glycinamide + L-glutamine + ATP + H2O = 2-formamido-N(1)-(5-O-phospho-beta-D-ribosyl)acetamidine + L-glutamate + ADP + phosphate + H(+). It participates in purine metabolism; IMP biosynthesis via de novo pathway; 5-amino-1-(5-phospho-D-ribosyl)imidazole from N(2)-formyl-N(1)-(5-phospho-D-ribosyl)glycinamide: step 1/2. Phosphoribosylformylglycinamidine synthase involved in the purines biosynthetic pathway. Catalyzes the ATP-dependent conversion of formylglycinamide ribonucleotide (FGAR) and glutamine to yield formylglycinamidine ribonucleotide (FGAM) and glutamate. The protein is Phosphoribosylformylglycinamidine synthase of Pseudomonas savastanoi pv. phaseolicola (strain 1448A / Race 6) (Pseudomonas syringae pv. phaseolicola (strain 1448A / Race 6)).